We begin with the raw amino-acid sequence, 452 residues long: NADH-quinone oxidoreductase subunit H (452 aa).

9 helical membrane-spanning segments follow: residues 28-48, 96-116, 136-156, 177-197, 210-230, 264-286, 301-321, 335-355, and 366-386; these read IILI…LMMI, VIYI…FSVI, LPVA…GIVL, VISY…YAGT, IWFA…MIGE, AEYV…GYLA, WWPA…FVWV, KLGW…VAVI, and YVTA…LWAW.

The protein belongs to the complex I subunit 1 family. NDH-1 is composed of 14 different subunits. Subunits NuoA, H, J, K, L, M, N constitute the membrane sector of the complex.

The protein localises to the cell membrane. The catalysed reaction is a quinone + NADH + 5 H(+)(in) = a quinol + NAD(+) + 4 H(+)(out). NDH-1 shuttles electrons from NADH, via FMN and iron-sulfur (Fe-S) centers, to quinones in the respiratory chain. The immediate electron acceptor for the enzyme in this species is believed to be ubiquinone. Couples the redox reaction to proton translocation (for every two electrons transferred, four hydrogen ions are translocated across the cytoplasmic membrane), and thus conserves the redox energy in a proton gradient. This subunit may bind ubiquinone. In Thermobifida fusca (strain YX), this protein is NADH-quinone oxidoreductase subunit H.